The following is a 198-amino-acid chain: tRNA (cytidine(56)-2'-O)-methyltransferase (198 aa).

Residues Leu81, 110–114, and 128–135 each bind S-adenosyl-L-methionine; these read GAEKV and IGNQPHSE. A disordered region spans residues 178-198; that stretch reads DAKQAEASGEGASRKNGQLPS.

Belongs to the aTrm56 family. As to quaternary structure, homodimer.

Its subcellular location is the cytoplasm. The catalysed reaction is cytidine(56) in tRNA + S-adenosyl-L-methionine = 2'-O-methylcytidine(56) in tRNA + S-adenosyl-L-homocysteine + H(+). In terms of biological role, specifically catalyzes the AdoMet-dependent 2'-O-ribose methylation of cytidine at position 56 in tRNAs. This chain is tRNA (cytidine(56)-2'-O)-methyltransferase, found in Pyrococcus abyssi (strain GE5 / Orsay).